A 590-amino-acid chain; its full sequence is Zinc finger protein 703 (590 aa).

Residues 1–14 (MSDSPAGSNPRTPE) are compositionally biased toward polar residues. 3 disordered regions span residues 1–43 (MSDS…DPLR), 96–293 (CSQI…AGHV), and 341–366 (LVGGQLSGGLGLPPGKPPSSSPLTGA). N-acetylserine is present on Ser2. Composition is skewed to low complexity over residues 27–37 (PAVPAAVSLLP), 128–139 (RSAPGAASAAAA), 171–189 (GSSSVSSTSSSSSSSPGDK), and 207–219 (APVSASSSSSSPG). The segment covering 241–251 (ELDKKDQEPKP) has biased composition (basic and acidic residues). Ser252 is subject to Phosphoserine. Gly residues-rich tracts occupy residues 260–273 (RGGGGEPGAHGGAE) and 341–352 (LVGGQLSGGLGL). Residues 456–484 (HSCNWVAASGPCDKRFATSEELLSHLRTH) form a C2H2-type zinc finger. Omega-N-methylarginine is present on Arg580.

The protein belongs to the Elbow/Noc family. In terms of assembly, interacts with TLE4; increases transcriptional repression. Interacts with DCAF7 and PHB2. May interact with HSPD1. Expressed in mammary epithelium.

The protein resides in the nucleus. Its subcellular location is the cytoplasm. Transcriptional corepressor which does not bind directly to DNA and may regulate transcription through recruitment of histone deacetylases to gene promoters. Regulates cell adhesion, migration and proliferation. May be required for segmental gene expression during hindbrain development. This Homo sapiens (Human) protein is Zinc finger protein 703 (ZNF703).